Consider the following 682-residue polypeptide: Polyadenylate-binding protein 5 (682 aa).

RRM domains lie at 59-136, 146-223, 239-316, and 342-419; these read SSLY…LSNR, GNVF…HFVR, TNVY…RAQK, and SNLY…LAQR. The PABC domain occupies 588 to 665; that stretch reads TISKLASDLA…ALDVLRRSAD (78 aa). Serine 600 carries the post-translational modification Phosphoserine.

The protein belongs to the polyadenylate-binding protein type-1 family. Expressed predominantly in immature flowers but also at lower levels in mature flowers and siliques. Detected in tapetum, pollen, ovules and developing seeds. Also detected in primary inflorescences and immature siliques.

The protein resides in the cytoplasm. The protein localises to the nucleus. Functionally, binds the poly(A) tail of mRNA. Appears to be an important mediator of the multiple roles of the poly(A) tail in mRNA biogenesis, stability and translation. The polypeptide is Polyadenylate-binding protein 5 (PAB5) (Arabidopsis thaliana (Mouse-ear cress)).